Here is a 128-residue protein sequence, read N- to C-terminus: Large ribosomal subunit protein eL8 (128 aa).

It belongs to the eukaryotic ribosomal protein eL8 family. As to quaternary structure, part of the 50S ribosomal subunit. Probably part of the RNase P complex.

It is found in the cytoplasm. Functionally, multifunctional RNA-binding protein that recognizes the K-turn motif in ribosomal RNA, the RNA component of RNase P, box H/ACA, box C/D and box C'/D' sRNAs. This Nitrosopumilus maritimus (strain SCM1) protein is Large ribosomal subunit protein eL8.